The chain runs to 387 residues: Mitogen-activated protein kinase homolog MMK1 (387 aa).

Residues 55-340 (KPPIMPIGKG…VEDALAHPYL (286 aa)) form the Protein kinase domain. ATP contacts are provided by residues 61-69 (IGKGAYGIV) and Lys84. Asp181 functions as the Proton acceptor in the catalytic mechanism. Thr213 is modified (phosphothreonine). Positions 213–215 (TEY) match the TXY motif. A Phosphotyrosine modification is found at Tyr215.

Belongs to the protein kinase superfamily. CMGC Ser/Thr protein kinase family. MAP kinase subfamily. The cofactor is Mg(2+). In terms of processing, dually phosphorylated on Thr-213 and Tyr-215, which activates the enzyme. Autophosphorylated. Roots and stems.

The enzyme catalyses L-seryl-[protein] + ATP = O-phospho-L-seryl-[protein] + ADP + H(+). It carries out the reaction L-threonyl-[protein] + ATP = O-phospho-L-threonyl-[protein] + ADP + H(+). Its activity is regulated as follows. Activated by tyrosine and threonine phosphorylation. May play a role in the mitogenic induction of symbiotic root nodules on Alfalfa by Rhizobium signal molecules. This is Mitogen-activated protein kinase homolog MMK1 (MMK1) from Medicago sativa (Alfalfa).